We begin with the raw amino-acid sequence, 367 residues long: CST complex subunit STN1 (367 aa).

The OB DNA-binding region spans V56 to V154. 2 winged helix-turn-helix (wHTH) regions span residues R190–R294 and E295–F367.

It belongs to the STN1 family. In terms of assembly, component of the CST complex, composed of TEN1, CTC1 and STN1. Interacts with TEN1 and CTC1; the interaction is direct. Interacts with ACD/TPP1.

It localises to the nucleus. The protein localises to the chromosome. It is found in the telomere. Functionally, component of the CST complex, a complex that binds to single-stranded DNA and is required to protect telomeres from DNA degradation. The CST complex binds single-stranded DNA with high affinity in a sequence-independent manner, while isolated subunits bind DNA with low affinity by themselves. In addition to telomere protection, the CST complex has probably a more general role in DNA metabolism at non-telomeric sites. This Ailuropoda melanoleuca (Giant panda) protein is CST complex subunit STN1.